A 757-amino-acid polypeptide reads, in one-letter code: Polymeric immunoglobulin receptor (757 aa).

The first 18 residues, methionine 1–methionine 18, serve as a signal peptide directing secretion. Residues lysine 19 to glutamate 126 enclose the Ig-like V-type 1; required for binding to polymeric IgA and IgM domain. Topologically, residues lysine 19–leucine 632 are extracellular. 7 cysteine pairs are disulfide-bonded: cysteine 40/cysteine 110, cysteine 56/cysteine 64, cysteine 152/cysteine 220, cysteine 257/cysteine 324, cysteine 271/cysteine 279, cysteine 370/cysteine 440, and cysteine 384/cysteine 394. Asparagine 83 carries an N-linked (GlcNAc...) asparagine glycan. Ig-like V-type domains lie at glycine 145–valine 237, arginine 250–tryptophan 341, alanine 353–valine 457, and proline 461–alanine 560. N-linked (GlcNAc...) asparagine glycans are attached at residues asparagine 420 and asparagine 468. 3 cysteine pairs are disulfide-bonded: cysteine 481–cysteine 543, cysteine 485–cysteine 519, and cysteine 495–cysteine 502. The disordered stretch occupies residues lysine 607–glycine 627. The helical transmembrane segment at valine 633–valine 653 threads the bilayer. Over arginine 654–alanine 757 the chain is Cytoplasmic. Phosphoserine is present on residues serine 665, serine 674, serine 681, and serine 727. The segment covering glutamate 679–aspartate 688 has biased composition (basic and acidic residues). The interval glutamate 679 to glutamate 730 is disordered.

In terms of assembly, interacts (mainly via CDR1-like domain) with dimeric IgA. Interacts (mainly via CDR2-like domain) with pentameric IgM. As to quaternary structure, either free or part of the secretory IgA (sIgA) complex that consists of two, four or five IgA monomers, and two additional non-Ig polypeptides, namely the JCHAIN and the secretory component (the proteolytic product of PIGR). Free secretory component interacts with bacterial antigens toxA of C.difficile and eae of E.coli. In terms of processing, in the absence of dimeric IgA, Ser-727 is phosphorylated which allows PIGR to function normally. N-glycosylated. N-glycosylation is required for anchoring IgA molecules to mucus, but is not necessary for Ig binding. Found in mammary gland, jejunum, lung, kidney and small intestine.

The protein localises to the cell membrane. The protein resides in the secreted. Functionally, mediates selective transcytosis of polymeric IgA and IgM across mucosal epithelial cells. Binds polymeric IgA and IgM at the basolateral surface of epithelial cells. The complex is then transported across the cell to be secreted at the apical surface. During this process, a cleavage occurs that separates the extracellular (known as the secretory component) from the transmembrane segment. Its function is as follows. Through its N-linked glycans ensures anchoring of secretory IgA (sIgA) molecules to mucus lining the epithelial surface to neutralize extracellular pathogens. On its own (free form) may act as a non-specific microbial scavenger to prevent pathogen interaction with epithelial cells. This is Polymeric immunoglobulin receptor (PIGR) from Bos taurus (Bovine).